Consider the following 109-residue polypeptide: U-scoloptoxin(16)-Ssd1a (109 aa).

The signal sequence occupies residues 1–23 (MTTSATVIIMVLCVGSLVIFSEG).

Contains 4 disulfide bonds. Expressed by the venom gland.

It is found in the secreted. The polypeptide is U-scoloptoxin(16)-Ssd1a (Scolopendra dehaani (Thai centipede)).